The sequence spans 399 residues: Insertion element IS116 uncharacterized 44.8 kDa protein (399 aa).

It belongs to the transposase IS1111A/IS1328/IS1533 family.

The sequence is that of Insertion element IS116 uncharacterized 44.8 kDa protein from Streptomyces clavuligerus.